We begin with the raw amino-acid sequence, 264 residues long: uncharacterized protein (264 aa).

The segment at 1–20 (MENIEKKCQPETINEDNNDE) is disordered.

It belongs to the mimivirus R73/L269/L862 family.

This is an uncharacterized protein from Acanthamoeba polyphaga mimivirus (APMV).